A 308-amino-acid chain; its full sequence is MNENNETLTRGFTLMGLFTHNKCSGFFFGVICAVFFMAMIANGVMIFLINIDPHLHTPMYFLLSHLSVIDTLYISTIVPKMLVDYLMGEGTISFIACTAQCFLYMGFMGAEFFLLGLMAYDRYVAICNPLRYPVLISWRVCWMILASSWFGGALDSFLLTPITMSLPFCASHQINHFFCEAPTMLRLACGDKTTYETVMYVCCVAMLLIPFSVVTASYTRILITVHQMTSAEGRKKAFATCSSHMMVVTLFYGAALYTYTLPQSYHTPIKDKVFSAFYTILTPLLNPLIYSLRNRDVMGALKRVVARC.

The Extracellular segment spans residues 1 to 28 (MNENNETLTRGFTLMGLFTHNKCSGFFF). Asn5 carries N-linked (GlcNAc...) asparagine glycosylation. The chain crosses the membrane as a helical span at residues 29–49 (GVICAVFFMAMIANGVMIFLI). Topologically, residues 50–57 (NIDPHLHT) are cytoplasmic. The helical transmembrane segment at 58–78 (PMYFLLSHLSVIDTLYISTIV) threads the bilayer. Topologically, residues 79–98 (PKMLVDYLMGEGTISFIACT) are extracellular. Residues Cys97 and Cys179 are joined by a disulfide bond. Residues 99 to 119 (AQCFLYMGFMGAEFFLLGLMA) form a helical membrane-spanning segment. The Cytoplasmic portion of the chain corresponds to 120-145 (YDRYVAICNPLRYPVLISWRVCWMIL). A helical membrane pass occupies residues 146–166 (ASSWFGGALDSFLLTPITMSL). Residues 167–203 (PFCASHQINHFFCEAPTMLRLACGDKTTYETVMYVCC) are Extracellular-facing. A helical transmembrane segment spans residues 204–224 (VAMLLIPFSVVTASYTRILIT). Residues 225–236 (VHQMTSAEGRKK) lie on the Cytoplasmic side of the membrane. The chain crosses the membrane as a helical span at residues 237 to 257 (AFATCSSHMMVVTLFYGAALY). Over 258–271 (TYTLPQSYHTPIKD) the chain is Extracellular. Residues 272–292 (KVFSAFYTILTPLLNPLIYSL) traverse the membrane as a helical segment. Residues 293 to 308 (RNRDVMGALKRVVARC) lie on the Cytoplasmic side of the membrane.

It belongs to the G-protein coupled receptor 1 family.

It localises to the cell membrane. Its function is as follows. Odorant receptor. The sequence is that of Olfactory receptor 2T6 (OR2T6) from Homo sapiens (Human).